A 600-amino-acid chain; its full sequence is Threonine dehydratase, mitochondrial (600 aa).

N6-(pyridoxal phosphate)lysine is present on Lys144. 2 consecutive ACT-like domains span residues 425 to 497 (VFLS…DISD) and 519 to 590 (RLYR…DETN).

This sequence belongs to the serine/threonine dehydratase family. In terms of assembly, homotetramer. Pyridoxal 5'-phosphate serves as cofactor.

The protein localises to the mitochondrion. The protein resides in the cytoplasm. The catalysed reaction is L-threonine = 2-oxobutanoate + NH4(+). It participates in amino-acid biosynthesis; L-isoleucine biosynthesis; 2-oxobutanoate from L-threonine: step 1/1. Its activity is regulated as follows. Isoleucine allosterically inhibits while valine allosterically activates this enzyme. This Schizosaccharomyces pombe (strain 972 / ATCC 24843) (Fission yeast) protein is Threonine dehydratase, mitochondrial.